The primary structure comprises 216 residues: Probable GTP-binding protein EngB (216 aa).

One can recognise an EngB-type G domain in the interval 30–204 (SGLEVAFAGR…QMVLAGWLDL (175 aa)). Residues 38-45 (GRSNAGKS), 64-68 (GRTQL), 82-85 (DLPG), 149-152 (TKAD), and 182-185 (LFSA) contribute to the GTP site. Mg(2+)-binding residues include Ser45 and Thr66.

This sequence belongs to the TRAFAC class TrmE-Era-EngA-EngB-Septin-like GTPase superfamily. EngB GTPase family. Requires Mg(2+) as cofactor.

In terms of biological role, necessary for normal cell division and for the maintenance of normal septation. This Ectopseudomonas mendocina (strain ymp) (Pseudomonas mendocina) protein is Probable GTP-binding protein EngB.